We begin with the raw amino-acid sequence, 635 residues long: MHGLLLAAGLLSLPLHVLAHPQPSTSTSLAGRAGAVDLNEFRVAHRSSYTSHDEMKKLPSIASFRQGTYLEVATELVKQTMPNMEFRLVDDHYVGDSGIGHVRFRQTMHGIDIDNSDFNVNVGKDGKVLSHGNSFYTGPAPSSNPMVKRDFIDPMQALHGVRKALNLPIKADGAHVEDMSEHKVMFKGTSGALSDPTAKLCYMAKEDGSLALTWRVETDIGDNWLLSYMDAKESSKVHNVVDYVAHATFQVYKWGLADPTEGKREILTNPWNLKTSPLTWLSDGQNNYTATRGNNAIAQYNPDGGSDYENNYRPSPKNLKFEYPYSPDMNPPKTYIDASVTELFYTSNVCHDLYYMLGFNEKAGNFQVNNRGQGGKGNDFVILNAQDGSGTNNANFATPPDGQPGRMRAYIWTRANPPRDASFEAGTIIHEYTHGLSNRLCGGPANSRCLNAIESGGMGEGWGDFYATAVRLKPNDTRKTNYVKGGWVNNSPKGVRMYPYSTDMNVNPLVYTSNNKLNEVHAIGTVWCTMLYEVLWNLIDKHGKNDGPVPIFENGVPNDGKYLAMKIVMDGMAIQPCNPNFVQARDAILDADMNLTKGANKCEIWKGFAKRGLGVGAKFDPKNRTGSTQVPNECK.

A signal peptide spans 1–19 (MHGLLLAAGLLSLPLHVLA). Residues 20–246 (HPQPSTSTSL…VHNVVDYVAH (227 aa)) constitute a propeptide that is removed on maturation. Asn287 carries N-linked (GlcNAc...) asparagine glycosylation. His430 contacts Zn(2+). Glu431 is an active-site residue. His434 lines the Zn(2+) pocket. 3 N-linked (GlcNAc...) asparagine glycosylation sites follow: Asn475, Asn594, and Asn623.

It belongs to the peptidase M36 family. The cofactor is Zn(2+).

The protein localises to the secreted. Its function is as follows. Secreted metalloproteinase probably acting as a virulence factor. The sequence is that of Probable extracellular metalloproteinase 1 (MEP1) from Arthroderma benhamiae (strain ATCC MYA-4681 / CBS 112371) (Trichophyton mentagrophytes).